The chain runs to 529 residues: Ribonuclease Y (529 aa).

The chain crosses the membrane as a helical span at residues glycine 4–tyrosine 24. In terms of domain architecture, KH spans leucine 216 to valine 297. The region spanning alanine 342 to glycine 435 is the HD domain.

Belongs to the RNase Y family.

It localises to the cell membrane. Functionally, endoribonuclease that initiates mRNA decay. This is Ribonuclease Y from Helicobacter pylori (strain J99 / ATCC 700824) (Campylobacter pylori J99).